The following is a 91-amino-acid chain: MEFFTMCVLAAGIGMALGTLGTGIGQGLAVKSAVEGTSRNPGASGKILTTMMIGLAMIESLAIYALVVCLIILFANPYKDIALELAKSVAK.

The next 2 membrane-spanning stretches (helical) occupy residues 4-24 and 53-73; these read FTMC…GTGI and IGLA…LIIL.

The protein belongs to the ATPase C chain family. As to quaternary structure, F-type ATPases have 2 components, F(1) - the catalytic core - and F(0) - the membrane proton channel. F(1) has five subunits: alpha(3), beta(3), gamma(1), delta(1), epsilon(1). F(0) has three main subunits: a(1), b(2) and c(10-14). The alpha and beta chains form an alternating ring which encloses part of the gamma chain. F(1) is attached to F(0) by a central stalk formed by the gamma and epsilon chains, while a peripheral stalk is formed by the delta and b chains.

It localises to the cell inner membrane. Functionally, f(1)F(0) ATP synthase produces ATP from ADP in the presence of a proton or sodium gradient. F-type ATPases consist of two structural domains, F(1) containing the extramembraneous catalytic core and F(0) containing the membrane proton channel, linked together by a central stalk and a peripheral stalk. During catalysis, ATP synthesis in the catalytic domain of F(1) is coupled via a rotary mechanism of the central stalk subunits to proton translocation. Its function is as follows. Key component of the F(0) channel; it plays a direct role in translocation across the membrane. A homomeric c-ring of between 10-14 subunits forms the central stalk rotor element with the F(1) delta and epsilon subunits. The chain is ATP synthase subunit c from Citrifermentans bemidjiense (strain ATCC BAA-1014 / DSM 16622 / JCM 12645 / Bem) (Geobacter bemidjiensis).